A 128-amino-acid polypeptide reads, in one-letter code: Holo-[acyl-carrier-protein] synthase (128 aa).

Mg(2+) is bound by residues aspartate 9 and glutamate 60.

Belongs to the P-Pant transferase superfamily. AcpS family. The cofactor is Mg(2+).

It is found in the cytoplasm. The catalysed reaction is apo-[ACP] + CoA = holo-[ACP] + adenosine 3',5'-bisphosphate + H(+). Its function is as follows. Transfers the 4'-phosphopantetheine moiety from coenzyme A to a Ser of acyl-carrier-protein. The polypeptide is Holo-[acyl-carrier-protein] synthase (Buchnera aphidicola subsp. Baizongia pistaciae (strain Bp)).